Reading from the N-terminus, the 445-residue chain is Trigger factor (445 aa).

The 86-residue stretch at 162–247 (GDQITMDAVG…VKAVHTAEPT (86 aa)) folds into the PPIase FKBP-type domain.

Belongs to the FKBP-type PPIase family. Tig subfamily.

Its subcellular location is the cytoplasm. It carries out the reaction [protein]-peptidylproline (omega=180) = [protein]-peptidylproline (omega=0). Its function is as follows. Involved in protein export. Acts as a chaperone by maintaining the newly synthesized protein in an open conformation. Functions as a peptidyl-prolyl cis-trans isomerase. This chain is Trigger factor, found in Rickettsia bellii (strain OSU 85-389).